We begin with the raw amino-acid sequence, 359 residues long: Hsp70-binding protein 1 (359 aa).

Residues 1–71 (MSDEGSRGSR…PPPEPMSEER (71 aa)) form a disordered region. Over residues 23–37 (SSGGGGGGSSAGGSG) the composition is skewed to gly residues. ARM repeat units follow at residues 132 to 174 (ENMD…TCSQ), 177 to 217 (AAIQ…CLVR), 220 to 259 (EAGL…NLLV), and 262 to 301 (PEHK…SLVT). Phosphoserine is present on residues serine 351 and serine 356.

As to quaternary structure, interacts with the ATP-binding domain of HSPA1A. Detected in a ternary complex containing STUB1, HSPA1A and HSPBP1. Interacts with PGLYRP1; this interaction blocks the cytotoxic activity of the PGLYRP1-HSPA1A complex. In terms of tissue distribution, ubiquitous.

Functionally, inhibits HSPA1A chaperone activity by changing the conformation of the ATP-binding domain of HSPA1A and interfering with ATP binding. Interferes with ubiquitination mediated by STUB1 and inhibits chaperone-assisted degradation of immature CFTR. This is Hsp70-binding protein 1 from Homo sapiens (Human).